The primary structure comprises 217 residues: Small ribosomal subunit protein uS3 (217 aa).

The KH type-2 domain occupies 38–106; sequence IRKFIQKELA…QVHINIVEIK (69 aa).

This sequence belongs to the universal ribosomal protein uS3 family. In terms of assembly, part of the 30S ribosomal subunit. Forms a tight complex with proteins S10 and S14.

Functionally, binds the lower part of the 30S subunit head. Binds mRNA in the 70S ribosome, positioning it for translation. The polypeptide is Small ribosomal subunit protein uS3 (Streptococcus thermophilus (strain CNRZ 1066)).